The chain runs to 863 residues: ATP-dependent helicase Lhr-Core protein 2 (863 aa).

ATP-binding residues include Phe-30, Gln-37, Lys-60, Thr-61, Asp-179, Glu-180, Arg-377, and His-380. The 194-residue stretch at 41–234 (VIEIHKGENV…FVFGFNDDGT (194 aa)) folds into the Helicase ATP-binding domain. A DEAH box motif is present at residues 179–182 (DEVH). Positions 275–424 (RLDELIEQHR…RIKIPQNPLD (150 aa)) constitute a Helicase C-terminal domain. The interval 418 to 512 (IPQNPLDVLV…AIYYMNTGTI (95 aa)) is WH domain. The tract at residues 513–863 (PDEAKIEVYT…KIMAMIGELE (351 aa)) is domain 4.

This sequence belongs to the Lhr helicase family. Lhr-Core subfamily. Monomer.

It catalyses the reaction ATP + H2O = ADP + phosphate + H(+). With respect to regulation, unwinding of dsRNA duplexes is inhibited by AMP-PMP and ATP-gamma-S. Functionally, a DNA:RNA helicase with a significant strand annealing activity, probably involved in DNA repair and RNA transactions. In vitro has a slow helicase activity with a preference for 3'-overhang duplexes; displaces RNA from 3'-overhang DNA:RNA or RNA:RNA duplexes. 3'-tailed double-stranded (ds)DNA is not unwound. The slow helicase activity on RNA duplexes is ATP-independent. Has strand annealing properties in the absence of ATP; forms 3'-overhang DNA:RNA, 3'-overhang dsRNA and 3'-overhang dsDNA duplexes but not 5'-overhang duplexes. A nucleic acid-dependent ATPase; single-stranded (ss)DNA and RNA are equally stimulatory. Binds ssDNA, RNA, dsDNA and dsRNA duplexes. The sequence is that of ATP-dependent helicase Lhr-Core protein 2 from Thermococcus barophilus (strain DSM 11836 / MP).